The primary structure comprises 1004 residues: Ephrin type-A receptor 8 (1004 aa).

Positions M1–A26 are cleaved as a signal peptide. Over G27–T541 the chain is Extracellular. An Eph LBD domain is found at E30–R208. 2 consecutive Fibronectin type-III domains span residues P327–A437 and A438–P533. N339, N406, and N431 each carry an N-linked (GlcNAc...) asparagine glycan. Residues I542–C562 traverse the membrane as a helical segment. Positions K563–Y569 are mediates interaction with ANKS1A and ANKS1B. Over K563 to L1004 the chain is Cytoplasmic. Residues A588 to G643 are mediates interaction with PIK3CG and required for endocytosis. Phosphotyrosine; by autocatalysis is present on Y615. The Protein kinase domain maps to I634–V895. Residues I640–V648 and K666 contribute to the ATP site. D759 serves as the catalytic Proton acceptor. Residue Y838 is modified to Phosphotyrosine; by autocatalysis. An SAM domain is found at N929–Q993. Positions R1002–L1004 match the PDZ-binding motif.

The protein belongs to the protein kinase superfamily. Tyr protein kinase family. Ephrin receptor subfamily. In terms of assembly, heterotetramer upon binding of the ligand. The heterotetramer is composed of an ephrin dimer and a receptor dimer. Oligomerization is probably required to induce biological responses. May also form heterodimers with other ephrin receptors. Interacts with FYN; possible downstream effector of EPHA8 in regulation of cell adhesion. Interacts with PIK3CG; regulates integrin-mediated cell adhesion to substrate. Interacts with TIAM1; regulates clathrin-mediated endocytosis of EPHA8. Interacts with ANKS1A and ANKS1B; EPHA8 kinase activity-independent but stimulated by EPHA8 ubiquitination. Post-translationally, phosphorylated. Phosphorylation is stimulated upon binding of its ligands including EFNA2, EFNA3 and EFNA5. Autophosphorylation on Tyr-615 is critical for association with FYN. Autophosphorylation on Tyr-838 modulates tyrosine kinase activity. In terms of processing, ubiquitinated. Ubiquitination by CBL regulates the receptor stability and activity through proteasomal degradation. ANKS1A prevents ubiquitination and degradation. As to expression, specifically expressed in the central nervous system.

It localises to the cell membrane. The protein localises to the cell projection. It is found in the early endosome membrane. The enzyme catalyses L-tyrosyl-[protein] + ATP = O-phospho-L-tyrosyl-[protein] + ADP + H(+). Its function is as follows. Receptor tyrosine kinase which binds promiscuously GPI-anchored ephrin-A family ligands residing on adjacent cells, leading to contact-dependent bidirectional signaling into neighboring cells. The signaling pathway downstream of the receptor is referred to as forward signaling while the signaling pathway downstream of the ephrin ligand is referred to as reverse signaling. The GPI-anchored ephrin-A EFNA2, EFNA3, and EFNA5 are able to activate EPHA8 through phosphorylation. With EFNA5 may regulate integrin-mediated cell adhesion and migration on fibronectin substrate but also neurite outgrowth. During development of the nervous system also plays a role in axon guidance. Downstream effectors of the EPHA8 signaling pathway include FYN which promotes cell adhesion upon activation by EPHA8 and the MAP kinases in the stimulation of neurite outgrowth. In Mus musculus (Mouse), this protein is Ephrin type-A receptor 8 (Epha8).